Here is a 557-residue protein sequence, read N- to C-terminus: Arginine--tRNA ligase (557 aa).

Positions 132 to 142 (ANPTGDLHLGH) match the 'HIGH' region motif.

The protein belongs to the class-I aminoacyl-tRNA synthetase family. Monomer.

It is found in the cytoplasm. The enzyme catalyses tRNA(Arg) + L-arginine + ATP = L-arginyl-tRNA(Arg) + AMP + diphosphate. The chain is Arginine--tRNA ligase from Geobacillus kaustophilus (strain HTA426).